The following is a 1203-amino-acid chain: Cingulin (1203 aa).

Residues 7–357 (MAEPRGPVDH…VMVSSGSTKA (351 aa)) are head. Positions 25 to 48 (EPVSGAEMGTLRRGGRRPAKDARA) are disordered. A ZIM motif is present at residues 48–62 (ASTYGVAVRVQGIAG). Residues 54 to 67 (AVRVQGIAGQPFVV) are interaction with TJP1/ZO1. A disordered region spans residues 89 to 127 (GASGALSSDLELPENPYSQVKGFPAPSQSSTSDEEPGAY). Phosphoserine is present on residues Ser95, Ser96, Ser135, Ser137, Ser140, Ser155, Ser165, Ser214, Ser217, Ser258, Ser276, Ser338, and Ser351. The disordered stretch occupies residues 186–266 (DSQLGGQARG…LSPLSGFSRS (81 aa)). Residues 207–231 (EQRKRSKSLDSRLPRDTFEERERQS) are compositionally biased toward basic and acidic residues. Positions 232–266 (TNHWTSSTKYDNHVGTSKQPAQSQNLSPLSGFSRS) are enriched in polar residues. A coiled-coil region spans residues 358-1160 (VAGQGELTRK…SLEKDSWRKA (803 aa)). Position 579 is an N6-acetyllysine (Lys579). At Thr712 the chain carries Phosphothreonine. Disordered regions lie at residues 1034-1053 (LASS…LESQ) and 1154-1181 (KDSW…EEFD). Positions 1044–1053 (SASLSQLESQ) are enriched in low complexity. Residues 1161 to 1203 (SRSAAESALKNEGLSSDEEFDSVYDPSSIASLLTESNLQTSSC) are tail. A phosphoserine mark is found at Ser1175, Ser1176, and Ser1182.

The protein belongs to the cingulin family. In terms of assembly, homodimer. Interacts with TJP1/ZO1. Interacts with SPEF1. Localized on the cytoplasmic face of tight junctions of polarized epithelia and some endothelia. Expressed in pancreas, kidney, liver and lung, but not in skeletal muscle, placenta, brain or heart.

The protein localises to the cell junction. It localises to the tight junction. Functionally, probably plays a role in the formation and regulation of the tight junction (TJ) paracellular permeability barrier. The sequence is that of Cingulin from Homo sapiens (Human).